A 215-amino-acid polypeptide reads, in one-letter code: Nucleoredoxin-like protein 1 (215 aa).

Positions 1-164 (MVDLFLGKVL…GAELIDRNFM (164 aa)) constitute a Thioredoxin; atypical domain. The tract at residues 190-215 (DEKKKKKKRDDDDDDDDGGGGGGPWG) is disordered.

It belongs to the nucleoredoxin family.

It localises to the cell projection. Its subcellular location is the cilium. The protein localises to the photoreceptor outer segment. Plays an important role in retinal cone photoreceptor survival. May play a role in cone cell viability, slowing down cone degeneration, does not seem to play a role in degenerating rods. The protein is Nucleoredoxin-like protein 1 (nxnl1) of Danio rerio (Zebrafish).